The primary structure comprises 347 residues: NADH-ubiquinone oxidoreductase chain 2 (347 aa).

10 helical membrane passes run 3-23, 25-45, 59-79, 111-131, 149-169, 178-198, 201-221, 242-262, 274-294, and 325-345; these read PIVFSTILTTAIMGTVIVMMS, HWLMVWIGFEMNLLAIIPILM, YFLTQATASMLLMSAIIINLM, FHFWVPEVTQGISLMSGLILL, INLDMLMTSALLSILVGGWGG, IMAYSSIAHMGWMTAILTYNP, TMLNMLIYIMMTLTTFMLLML, SLILIIMLSLGGLPPLSGFIP, NSIILPTSMAIMALLNLYFYL, and LLPTLIIMSTLLLPLMPTMSI.

This sequence belongs to the complex I subunit 2 family. In terms of assembly, core subunit of respiratory chain NADH dehydrogenase (Complex I) which is composed of 45 different subunits. Interacts with TMEM242.

The protein resides in the mitochondrion inner membrane. It catalyses the reaction a ubiquinone + NADH + 5 H(+)(in) = a ubiquinol + NAD(+) + 4 H(+)(out). Core subunit of the mitochondrial membrane respiratory chain NADH dehydrogenase (Complex I) which catalyzes electron transfer from NADH through the respiratory chain, using ubiquinone as an electron acceptor. Essential for the catalytic activity and assembly of complex I. This is NADH-ubiquinone oxidoreductase chain 2 from Rhinoceros unicornis (Greater Indian rhinoceros).